The sequence spans 89 residues: Small ribosomal subunit protein uS15 (89 aa).

The protein belongs to the universal ribosomal protein uS15 family. In terms of assembly, part of the 30S ribosomal subunit. Forms a bridge to the 50S subunit in the 70S ribosome, contacting the 23S rRNA.

In terms of biological role, one of the primary rRNA binding proteins, it binds directly to 16S rRNA where it helps nucleate assembly of the platform of the 30S subunit by binding and bridging several RNA helices of the 16S rRNA. Its function is as follows. Forms an intersubunit bridge (bridge B4) with the 23S rRNA of the 50S subunit in the ribosome. The protein is Small ribosomal subunit protein uS15 of Chloroflexus aurantiacus (strain ATCC 29366 / DSM 635 / J-10-fl).